Consider the following 322-residue polypeptide: Epiphycan (322 aa).

An N-terminal signal peptide occupies residues 1–19 (MKTLAGLVLGLVIFDAAVT). Residue Thr60 is glycosylated (O-linked (GalNAc...) threonine). A glycan (O-linked (Xyl...) (dermatan sulfate) serine) is linked at Ser64. A disordered region spans residues 64–101 (SGNRELLTPPPQPEKAQEEEEEEESTPRLIDGSSPQEP). O-linked (GalNAc...) serine glycosylation is present at Ser96. One can recognise an LRRNT domain in the interval 106–143 (VLGPHTNEDFPTCLLCTCISTTVYCDDHELDAIPPLPK). A disulfide bond links Cys118 and Cys130. 5 LRR repeats span residues 144-165 (NTAY…DFAS), 168-189 (DLKR…AFRK), 192-213 (QLRE…PTTL), 238-258 (DLHH…PLPE), and 259-280 (NLRA…TFCN). Cys279 and Cys312 are joined by a disulfide. N-linked (GlcNAc...) asparagine glycosylation is found at Asn283 and Asn302. The stretch at 290–310 (ALEDIRLDGNPINLSKTPQAY) is one LRR 6 repeat.

This sequence belongs to the small leucine-rich proteoglycan (SLRP) family. SLRP class III subfamily. The O-linked polysaccharides on Thr-60 and Ser-96 are probably the mucin type linked to GalNAc. There is one glycosaminoglycan chain, known to be dermatan sulfate, and it is probably the O-glycosylation at Ser-64. In terms of tissue distribution, cartilage, ligament, and placenta.

It is found in the secreted. It localises to the extracellular space. The protein localises to the extracellular matrix. May have a role in bone formation and also in establishing the ordered structure of cartilage through matrix organization. The polypeptide is Epiphycan (EPYC) (Homo sapiens (Human)).